Reading from the N-terminus, the 422-residue chain is Adenylosuccinate synthetase (422 aa).

GTP-binding positions include 11–17 (GDEGKGK) and 39–41 (GHT). The Proton acceptor role is filled by Asp-12. Asp-12 and Gly-39 together coordinate Mg(2+). IMP-binding positions include 12-15 (DEGK), 37-40 (NAGH), Thr-129, Arg-143, Asn-220, Thr-235, and Arg-299. The Proton donor role is filled by His-40. 295–301 (VTTGRKR) serves as a coordination point for substrate. Residues Arg-301, 327–329 (KLD), and 410–412 (GTG) each bind GTP.

This sequence belongs to the adenylosuccinate synthetase family. As to quaternary structure, homodimer. The cofactor is Mg(2+).

It localises to the cytoplasm. The catalysed reaction is IMP + L-aspartate + GTP = N(6)-(1,2-dicarboxyethyl)-AMP + GDP + phosphate + 2 H(+). The protein operates within purine metabolism; AMP biosynthesis via de novo pathway; AMP from IMP: step 1/2. Functionally, plays an important role in the de novo pathway and in the salvage pathway of purine nucleotide biosynthesis. Catalyzes the first committed step in the biosynthesis of AMP from IMP. The protein is Adenylosuccinate synthetase of Arthroderma otae (strain ATCC MYA-4605 / CBS 113480) (Microsporum canis).